A 138-amino-acid polypeptide reads, in one-letter code: Histone H2B.4 (138 aa).

Positions 1 to 39 (MAPKAAEKKPAEKKPAGKAPAEKLPKAEKKISKDAGGSE) are enriched in basic and acidic residues. A disordered region spans residues 1–48 (MAPKAAEKKPAEKKPAGKAPAEKLPKAEKKISKDAGGSEKKKKKSKKS). A2 carries the n,N,N-trimethylalanine; alternate modification. Position 2 is a n,N-dimethylalanine; alternate (A2). A2 is modified (N-methylalanine; alternate). At K4 the chain carries N6-methyllysine. N6-acetyllysine is present on residues K8 and K13. At K14 the chain carries N6,N6-dimethyllysine. 4 positions are modified to N6-acetyllysine: K18, K23, K29, and K30. K135 participates in a covalent cross-link: Glycyl lysine isopeptide (Lys-Gly) (interchain with G-Cter in ubiquitin).

Belongs to the histone H2B family. As to quaternary structure, the nucleosome is a histone octamer containing two molecules each of H2A, H2B, H3 and H4 assembled in one H3-H4 heterotetramer and two H2A-H2B heterodimers. The octamer wraps approximately 147 bp of DNA. In terms of processing, can be acetylated to form H2BK6ac, H2BK33ac and H2BK34ac. Monoubiquitinated by BRE1 to form H2BK143ub1 and deubiquitinated by UBP26. Required for heterochromatic histone H3 di- and trimethylation at H3K4me. May give a specific tag for epigenetic transcriptional activation.

Its subcellular location is the nucleus. The protein localises to the chromosome. Its function is as follows. Core component of nucleosome. Nucleosomes wrap and compact DNA into chromatin, limiting DNA accessibility to the cellular machineries which require DNA as a template. Histones thereby play a central role in transcription regulation, DNA repair, DNA replication and chromosomal stability. DNA accessibility is regulated via a complex set of post-translational modifications of histones, also called histone code, and nucleosome remodeling. The polypeptide is Histone H2B.4 (Arabidopsis thaliana (Mouse-ear cress)).